The primary structure comprises 198 residues: Putative glutathione S-transferase alpha-5 (198 aa).

Residues 2–78 form the GST N-terminal domain; the sequence is TKPTLTYFPV…YISEKHDFRG (77 aa). Glutathione-binding positions include tyrosine 8, arginine 42, 49–50, and 62–63; these read QL and QT. The region spanning 80–198 is the GST C-terminal domain; the sequence is TKEERARAHQ…YLESRPQSNF (119 aa).

This sequence belongs to the GST superfamily. Alpha family.

The catalysed reaction is RX + glutathione = an S-substituted glutathione + a halide anion + H(+). In terms of biological role, conjugation of reduced glutathione to a wide number of exogenous and endogenous hydrophobic electrophiles. The chain is Putative glutathione S-transferase alpha-5 (gsta5) from Dictyostelium discoideum (Social amoeba).